Here is a 249-residue protein sequence, read N- to C-terminus: 3-deoxy-D-manno-octulosonic acid kinase (249 aa).

Residue aspartate 175 is part of the active site.

It belongs to the protein kinase superfamily. KdkA/RfaP family.

It is found in the cell inner membrane. It catalyses the reaction an alpha-Kdo-(2-&gt;6)-lipid IVA + ATP = a 4-O-phospho-alpha-Kdo-(2-&gt;6)-lipid IVA + ADP + H(+). It participates in bacterial outer membrane biogenesis; LPS core biosynthesis. In terms of biological role, catalyzes the ATP-dependent phosphorylation of the 3-deoxy-D-manno-octulosonic acid (Kdo) residue in Kdo-lipid IV(A) at the 4-OH position. The sequence is that of 3-deoxy-D-manno-octulosonic acid kinase from Stenotrophomonas maltophilia (strain K279a).